We begin with the raw amino-acid sequence, 498 residues long: Glycylpeptide N-tetradecanoyltransferase 2 (498 aa).

The segment at 1 to 88 (MAEDSESAAS…QPSKNPSVPM (88 aa)) is disordered. Over residues 15–32 (ELDDQDTCGIDGDNEEET) the composition is skewed to acidic residues. Ser38 is modified (phosphoserine). A compositionally biased stretch (basic residues) spans 45 to 57 (AKKKKKKQKRKKE). A compositionally biased stretch (polar residues) spans 61-86 (SGGTKSDSASDSQEIKIQQPSKNPSV). Tetradecanoyl-CoA-binding residues include His117, Trp122, Leu250, Val252, Ser258, Arg260, Val261, and Ala262.

The protein belongs to the NMT family.

Its subcellular location is the cytoplasm. It is found in the membrane. It carries out the reaction N-terminal glycyl-[protein] + tetradecanoyl-CoA = N-tetradecanoylglycyl-[protein] + CoA + H(+). The enzyme catalyses N-terminal glycyl-L-lysyl-[protein] + tetradecanoyl-CoA = N-terminal glycyl-(N(6)-tetradecanoyl)-L-lysyl-[protein] + CoA + H(+). Functionally, adds a myristoyl group to the N-terminal glycine residue of certain cellular and viral proteins. Also able to mediate N-terminal lysine myristoylation of proteins: catalyzes myristoylation of ARF6 on both 'Gly-2' and 'Lys-3'. Lysine myristoylation is required to maintain ARF6 on membranes during the GTPase cycle. The chain is Glycylpeptide N-tetradecanoyltransferase 2 from Homo sapiens (Human).